The primary structure comprises 345 residues: Phosphoribosylformylglycinamidine cyclo-ligase (345 aa).

This sequence belongs to the AIR synthase family.

The protein localises to the cytoplasm. The catalysed reaction is 2-formamido-N(1)-(5-O-phospho-beta-D-ribosyl)acetamidine + ATP = 5-amino-1-(5-phospho-beta-D-ribosyl)imidazole + ADP + phosphate + H(+). Its pathway is purine metabolism; IMP biosynthesis via de novo pathway; 5-amino-1-(5-phospho-D-ribosyl)imidazole from N(2)-formyl-N(1)-(5-phospho-D-ribosyl)glycinamide: step 2/2. This is Phosphoribosylformylglycinamidine cyclo-ligase from Klebsiella pneumoniae (strain 342).